Here is a 513-residue protein sequence, read N- to C-terminus: MLTRVKSAVANFMGGIMAGSSGSEHGGSGCGGSDLPLRFPYGRPEFLGLSQDEVECSADHIARPILILKETRRLPWATGYAEVINAGKSTHNEDQASCEVLTVKKKAGTITSTPNRNSKRRSSLPNGEGLQLKENSESEGISCHYWSLFDGHAGSGAAVVASRLLQHHITQQLQDIVEILKNSAILPPTCLGEEPESTPAHGRTLTRAASLRGGVGAPGSPSTPPTRFFTEKKIPHECLVIGALESAFKEMDLQIERERSAYNISGGCTALIVVCLLGKLYVANAGDSRAIIIRNGEIIPMSSEFTPETERQRLQYLAFMQPHLLGNEFTHLEFPRRVQRKELGKKMLYRDFNMTGWAYKTIEDDDLKFPLIYGEGKKARVMATIGVTRGLGDHDLKVHDSNIYIKPFLSSAPEVRVYDLSRYEHGADDVLILATDGLWDVLSNEEVAEAITQFLPNCDPDDPHRYTLAAQDLVMRARGVLKDRGWRISNDRLGSGDDISVYVIPLIHGNKLS.

Ser-7 is subject to Phosphoserine. The PPM-type phosphatase domain occupies 77 to 506 (ATGYAEVINA…DDISVYVIPL (430 aa)). The interval 109–133 (TITSTPNRNSKRRSSLPNGEGLQLK) is disordered. The residue at position 113 (Thr-113) is a Phosphothreonine. Phosphoserine is present on residues Ser-123 and Ser-210. At Arg-212 the chain carries Omega-N-methylarginine. Phosphoserine is present on Ser-220. At Thr-223 the chain carries Phosphothreonine. Ser-421 bears the Phosphoserine mark.

Belongs to the PP2C family.

It is found in the nucleus. The protein localises to the cytoplasm. The enzyme catalyses O-phospho-L-seryl-[protein] + H2O = L-seryl-[protein] + phosphate. The catalysed reaction is O-phospho-L-threonyl-[protein] + H2O = L-threonyl-[protein] + phosphate. Dephosphorylates CDKN1B at 'Thr-187', thus removing a signal for proteasomal degradation. This chain is Protein phosphatase 1H (Ppm1h), found in Mus musculus (Mouse).